We begin with the raw amino-acid sequence, 399 residues long: Inositol polyphosphate 1-phosphatase (399 aa).

Residue Asp54 coordinates Li(+). Glu79 serves as a coordination point for Mg(2+). Residue Glu80 participates in Li(+) binding. Asp153 and Ile155 together coordinate Mg(2+). 1D-myo-inositol 1,4-bisphosphate is bound by residues Asp156, Ser157, Thr158, Ser267, Lys269, Gly289, Ala290, Lys293, and Thr311. Mg(2+) is bound at residue Asp316. At Ser317 the chain carries Phosphoserine.

It belongs to the inositol monophosphatase superfamily. In terms of assembly, monomer. Mg(2+) is required as a cofactor. As to expression, ubiquitously expressed, with highest levels in pancreas and kidney.

The catalysed reaction is 1D-myo-inositol 1,4-bisphosphate + H2O = 1D-myo-inositol 4-phosphate + phosphate. The enzyme catalyses 1D-myo-inositol 1,3,4-trisphosphate + H2O = 1D-myo-inositol 3,4-bisphosphate + phosphate. It participates in signal transduction; phosphatidylinositol signaling pathway. Inhibited by Li(+). Its function is as follows. Mg(2+)-dependent phosphatase that catalyzes the hydrolysis of the 1-position phosphate from inositol 1,4-bisphosphate and inositol 1,3,4-trisphosphate and participates in inositol phosphate metabolism. The sequence is that of Inositol polyphosphate 1-phosphatase from Homo sapiens (Human).